We begin with the raw amino-acid sequence, 227 residues long: DNA repair protein RecO (227 aa).

This sequence belongs to the RecO family.

In terms of biological role, involved in DNA repair and RecF pathway recombination. This chain is DNA repair protein RecO, found in Pseudomonas putida (strain ATCC 700007 / DSM 6899 / JCM 31910 / BCRC 17059 / LMG 24140 / F1).